The primary structure comprises 688 residues: Ethylmalonyl-CoA mutase (688 aa).

The 130-residue stretch at 530–659 (TPRLVVGKPG…VGLAKVVERA (130 aa)) folds into the B12-binding domain. Adenosylcob(III)alamin is bound at residue His-543. The interval 666-688 (DRADTEAGVPGAPKRNESGAQVF) is disordered.

This sequence belongs to the methylmalonyl-CoA mutase family. It depends on adenosylcob(III)alamin as a cofactor.

It carries out the reaction (2R)-ethylmalonyl-CoA = (2S)-methylsuccinyl-CoA. In terms of biological role, radical enzyme that catalyzes the transformation of (2R)-ethylmalonyl-CoA to (2S)-methylsuccinyl-CoA. Is involved in the ethylmalonyl-CoA pathway for acetyl-CoA assimilation required for M.extorquens growth on one- and two-carbon compounds such as ethylamine, methanol or ethanol as sole carbon source. This enzyme acts as a regulatory metabolic control point in this pathway, that allows M.extorquens to efficiently restore metabolic balance when challenged with a sudden change in the growth substrate. This chain is Ethylmalonyl-CoA mutase, found in Methylorubrum extorquens (strain ATCC 14718 / DSM 1338 / JCM 2805 / NCIMB 9133 / AM1) (Methylobacterium extorquens).